A 351-amino-acid chain; its full sequence is Transmembrane protein 115 (351 aa).

Residues 1–19 (MQRALPGARQHLGAILSSA) are Cytoplasmic-facing. A mediates homooligomerization region spans residues 1–205 (MQRALPGARQ…FGLISSWVYL (205 aa)). The chain crosses the membrane as a helical span at residues 20 to 40 (SVVVKALCAAVLFLYLLSFAV). At 41-97 (DTGCLAVTPGYLFPPNFWIWTLATHGLMEQHVWDVAISLATVVVAGRLLEPLWGALE) the chain is on the lumenal side. A helical membrane pass occupies residues 98 to 118 (LLIFFSVVNVSVGLLGAFAYL). The Cytoplasmic portion of the chain corresponds to 119–126 (LTYMASFN). A helical transmembrane segment spans residues 127–147 (LVYLFTVRIHGALGFLGGVLV). The Lumenal portion of the chain corresponds to 148–165 (ALKQTMGDCVVLRVPQVR). Residues 166–186 (VSVVPMLLLGLLLLLRLATLL) traverse the membrane as a helical segment. Residues 187 to 351 (QSPALASYGF…ITFEAAPPTL (165 aa)) are Cytoplasmic-facing. The interval 206-229 (RFYQRHSRGRGDMADHFAFATFFP) is mediates localization to the Golgi. The interval 300–351 (DQSVWPSMDDDEEEAGAKVDSPMPSDKAPTLPGKGAVPESSLITFEAAPPTL) is disordered. Residue T329 is modified to Phosphothreonine.

It belongs to the TMEM115 family. As to quaternary structure, homooligomer. Interacts with COPB1. May interact with LMAN1. Interacts with the COG complex; probably through COG3.

The protein localises to the golgi apparatus. Its subcellular location is the golgi stack membrane. Its function is as follows. May play a role in retrograde transport of proteins from the Golgi to the endoplasmic reticulum. May indirectly play a role in protein glycosylation in the Golgi. This is Transmembrane protein 115 from Bos taurus (Bovine).